Reading from the N-terminus, the 218-residue chain is Ribose-5-phosphate isomerase A (218 aa).

Substrate contacts are provided by residues 28 to 31 (TGST), 81 to 84 (DGAD), and 94 to 97 (KGGG). Residue glutamate 103 is the Proton acceptor of the active site. Lysine 121 is a substrate binding site.

Belongs to the ribose 5-phosphate isomerase family. Homodimer.

The catalysed reaction is aldehydo-D-ribose 5-phosphate = D-ribulose 5-phosphate. Its pathway is carbohydrate degradation; pentose phosphate pathway; D-ribose 5-phosphate from D-ribulose 5-phosphate (non-oxidative stage): step 1/1. In terms of biological role, catalyzes the reversible conversion of ribose-5-phosphate to ribulose 5-phosphate. The chain is Ribose-5-phosphate isomerase A from Pseudoalteromonas atlantica (strain T6c / ATCC BAA-1087).